Consider the following 367-residue polypeptide: UDP-N-acetylglucosamine--N-acetylmuramyl-(pentapeptide) pyrophosphoryl-undecaprenol N-acetylglucosamine transferase (367 aa).

Residues Thr13 to Gly15, Arg168, Ser196, Ile252, and Gln297 each bind UDP-N-acetyl-alpha-D-glucosamine.

The protein belongs to the glycosyltransferase 28 family. MurG subfamily.

The protein localises to the cell inner membrane. It catalyses the reaction di-trans,octa-cis-undecaprenyl diphospho-N-acetyl-alpha-D-muramoyl-L-alanyl-D-glutamyl-meso-2,6-diaminopimeloyl-D-alanyl-D-alanine + UDP-N-acetyl-alpha-D-glucosamine = di-trans,octa-cis-undecaprenyl diphospho-[N-acetyl-alpha-D-glucosaminyl-(1-&gt;4)]-N-acetyl-alpha-D-muramoyl-L-alanyl-D-glutamyl-meso-2,6-diaminopimeloyl-D-alanyl-D-alanine + UDP + H(+). The protein operates within cell wall biogenesis; peptidoglycan biosynthesis. Functionally, cell wall formation. Catalyzes the transfer of a GlcNAc subunit on undecaprenyl-pyrophosphoryl-MurNAc-pentapeptide (lipid intermediate I) to form undecaprenyl-pyrophosphoryl-MurNAc-(pentapeptide)GlcNAc (lipid intermediate II). The polypeptide is UDP-N-acetylglucosamine--N-acetylmuramyl-(pentapeptide) pyrophosphoryl-undecaprenol N-acetylglucosamine transferase (Methylibium petroleiphilum (strain ATCC BAA-1232 / LMG 22953 / PM1)).